A 237-amino-acid chain; its full sequence is MRPSQRAADELRPVTFERNVARYAEGSCLIKFGSTHVLCTASLEDKPPAWLRGQGRGWVSAEYAMLPRATHTRTKRESTTGKPSGRTQEIQRLIGRSLRAVTNLQGLGERQITIDCDVLQADGGTRTAAITGAWVALHDCLKWMRQRSIIKDLPLRDHVAAISCGVSNGESVLDLDYAEDSAAETDANFVITGSGSLVEVQATAEGAVFTETQLTAMLALARGGITTLVEMQKAAVA.

Residues R86 and 124-126 each bind phosphate; that span reads GTR.

Belongs to the RNase PH family. In terms of assembly, homohexameric ring arranged as a trimer of dimers.

It carries out the reaction tRNA(n+1) + phosphate = tRNA(n) + a ribonucleoside 5'-diphosphate. Functionally, phosphorolytic 3'-5' exoribonuclease that plays an important role in tRNA 3'-end maturation. Removes nucleotide residues following the 3'-CCA terminus of tRNAs; can also add nucleotides to the ends of RNA molecules by using nucleoside diphosphates as substrates, but this may not be physiologically important. Probably plays a role in initiation of 16S rRNA degradation (leading to ribosome degradation) during starvation. The sequence is that of Ribonuclease PH from Methylocella silvestris (strain DSM 15510 / CIP 108128 / LMG 27833 / NCIMB 13906 / BL2).